A 401-amino-acid chain; its full sequence is Carboxybiotin decarboxylase (401 aa).

10 helical membrane-spanning segments follow: residues 20–40, 46–66, 70–90, 107–127, 131–151, 173–193, 244–264, 275–295, 306–326, and 380–400; these read VISI…YFGF, PLIM…VLFL, VVGT…VNLM, LIAC…FILI, ASII…IIGI, MVLF…AIIA, LCLL…GIAI, LLET…LGAL, ISLI…GGVL, and VCGL…LFLL.

It is found in the cell membrane. The enzyme catalyses N(6)-carboxybiotinyl-L-lysyl-[protein] + n Na(+)(in) + H(+) = N(6)-biotinyl-L-lysyl-[protein] + n Na(+)(out) + CO2. Its function is as follows. Beta subunit of the biotin-dependent malonate decarboxylase multienzyme complex (EC 7.2.4.4). Acts as an integral membrane-bound carboxybiotin protein decarboxylase by releasing the carboxyl group of the carboxylated biotin carrier MADF. The free energy of the decarboxylation reaction is used to pump Na(+) out of the cell. The sequence is that of Carboxybiotin decarboxylase (madB) from Malonomonas rubra.